A 183-amino-acid chain; its full sequence is uncharacterized protein (183 aa).

The chain crosses the membrane as a helical span at residues 153–175 (LLYVFIRLFAGCLKVFRLCILWL).

It is found in the membrane. This is an uncharacterized protein from Saccharomyces cerevisiae (strain ATCC 204508 / S288c) (Baker's yeast).